Consider the following 128-residue polypeptide: LIM domain-containing protein 2 (128 aa).

Methionine 1 carries the N-acetylmethionine modification. The tract at residues 1-25 (MFQAAGAAQATPSHEAKGSSGNSTV) is disordered. Residues 39–99 (ETCAACQKTV…KPHFQQLFKS (61 aa)) enclose the LIM zinc-binding domain. Residues cysteine 41, cysteine 44, histidine 62, cysteine 65, cysteine 68, cysteine 71, cysteine 89, and histidine 92 each contribute to the Zn(2+) site.

Interacts with ILK.

It is found in the cytoplasm. The protein resides in the nucleus. Acts as an activator of the protein-kinase ILK, thereby regulating cell motility. In Rattus norvegicus (Rat), this protein is LIM domain-containing protein 2 (Limd2).